The primary structure comprises 364 residues: Lysophosphatidic acid receptor 1 (364 aa).

Residues M1–K50 are Extracellular-facing. 2 disulfide bridges follow: C24–C190 and C188–C195. 2 N-linked (GlcNAc...) asparagine glycosylation sites follow: N27 and N35. K39 lines the a 1-acyl-sn-glycero-3-phosphate pocket. A helical membrane pass occupies residues L51 to Y75. The Cytoplasmic portion of the chain corresponds to V76–P83. A helical transmembrane segment spans residues I84–F107. Residues N108 to W121 lie on the Extracellular side of the membrane. Residues L122–I144 traverse the membrane as a helical segment. R124–D129 contributes to the a 1-acyl-sn-glycero-3-phosphate binding site. Topologically, residues E145–R163 are cytoplasmic. The helical transmembrane segment at V164–V184 threads the bilayer. Over G185–D204 the chain is Extracellular. Residues S205–Y225 form a helical membrane-spanning segment. Residue W210 coordinates a 1-acyl-sn-glycero-3-phosphate. The Cytoplasmic portion of the chain corresponds to A226–S255. Residues L256 to L280 form a helical membrane-spanning segment. Over D281 to K294 the chain is Extracellular. Residues C284 and C287 are joined by a disulfide bond. Residues F295 to D315 form a helical membrane-spanning segment. The Cytoplasmic portion of the chain corresponds to K316–V364. S341 is modified (phosphoserine). Residue T351 is modified to Phosphothreonine.

This sequence belongs to the G-protein coupled receptor 1 family. Interacts with RALA and GRK2. Interacts with GNAQ and GNA13. Interacts with CD14; the interaction is enhanced by exposure to bacterial lipopolysaccharide (LPS). Post-translationally, N-glycosylated. In terms of tissue distribution, expressed in many adult organs, including brain, heart, colon, small intestine, placenta, prostate, ovary, pancreas, testes, spleen, skeletal muscle, and kidney. Little or no expression in liver, lung, thymus, or peripheral blood leukocytes. Detected in lung fibroblasts from bronchoalveolar fluid from patients with idiopathic pulmonary fibrosis. Detected in bone marrow-derived mesenchymal stem cells.

The protein resides in the cell surface. It is found in the cell membrane. It localises to the endosome. Its function is as follows. Receptor for lysophosphatidic acid (LPA). Plays a role in the reorganization of the actin cytoskeleton, cell migration, differentiation and proliferation, and thereby contributes to the responses to tissue damage and infectious agents. Activates downstream signaling cascades via the G(i)/G(o), G(12)/G(13), and G(q) families of heteromeric G proteins. Signaling inhibits adenylyl cyclase activity and decreases cellular cAMP levels. Signaling triggers an increase of cytoplasmic Ca(2+) levels. Activates RALA; this leads to the activation of phospholipase C (PLC) and the formation of inositol 1,4,5-trisphosphate. Signaling mediates activation of down-stream MAP kinases. Contributes to the regulation of cell shape. Promotes Rho-dependent reorganization of the actin cytoskeleton in neuronal cells and neurite retraction. Promotes the activation of Rho and the formation of actin stress fibers. Promotes formation of lamellipodia at the leading edge of migrating cells via activation of RAC1. Through its function as LPA receptor, plays a role in chemotaxis and cell migration, including responses to injury and wounding. Plays a role in triggering inflammation in response to bacterial lipopolysaccharide (LPS) via its interaction with CD14. Promotes cell proliferation in response to LPA. Inhibits the intracellular ciliogenesis pathway in response to LPA and through AKT1 activation. Required for normal skeleton development. May play a role in osteoblast differentiation. Required for normal brain development. Required for normal proliferation, survival and maturation of newly formed neurons in the adult dentate gyrus. Plays a role in pain perception and in the initiation of neuropathic pain. The protein is Lysophosphatidic acid receptor 1 (LPAR1) of Homo sapiens (Human).